Consider the following 189-residue polypeptide: UPF0301 protein PFLU_5755 (189 aa).

It belongs to the UPF0301 (AlgH) family.

The sequence is that of UPF0301 protein PFLU_5755 from Pseudomonas fluorescens (strain SBW25).